The chain runs to 256 residues: Probable ribosomal RNA small subunit methyltransferase A (256 aa).

S-adenosyl-L-methionine contacts are provided by His-8, Leu-10, Gly-34, Glu-55, Asp-83, and Asn-98.

The protein belongs to the class I-like SAM-binding methyltransferase superfamily. rRNA adenine N(6)-methyltransferase family. RsmA subfamily.

The protein localises to the cytoplasm. In terms of biological role, specifically dimethylates two adjacent adenosines in the loop of a conserved hairpin near the 3'-end of 16S rRNA in the 30S particle. May play a critical role in biogenesis of 30S subunits. The polypeptide is Probable ribosomal RNA small subunit methyltransferase A (Methanospirillum hungatei JF-1 (strain ATCC 27890 / DSM 864 / NBRC 100397 / JF-1)).